The primary structure comprises 204 residues: High frequency lysogenization protein HflD homolog (204 aa).

The protein belongs to the HflD family.

It localises to the cytoplasm. The protein resides in the cell inner membrane. The sequence is that of High frequency lysogenization protein HflD homolog from Shewanella amazonensis (strain ATCC BAA-1098 / SB2B).